The sequence spans 75 residues: Small ribosomal subunit protein eS31 (75 aa).

Zn(2+) is bound by residues Cys-41, Cys-44, Cys-60, and Cys-63. The segment at 41–63 adopts a C4-type zinc-finger fold; the sequence is CPRCGSIMAHHLKPNERWSCGKC.

The protein belongs to the eukaryotic ribosomal protein eS31 family. Part of the 30S ribosomal subunit. Requires Zn(2+) as cofactor.

The protein is Small ribosomal subunit protein eS31 of Saccharolobus solfataricus (strain ATCC 35092 / DSM 1617 / JCM 11322 / P2) (Sulfolobus solfataricus).